The primary structure comprises 551 residues: Arginine--tRNA ligase (551 aa).

Residues 125–135 (ANPTGPLHIGH) carry the 'HIGH' region motif.

This sequence belongs to the class-I aminoacyl-tRNA synthetase family. As to quaternary structure, monomer.

Its subcellular location is the cytoplasm. The catalysed reaction is tRNA(Arg) + L-arginine + ATP = L-arginyl-tRNA(Arg) + AMP + diphosphate. The protein is Arginine--tRNA ligase of Nitratidesulfovibrio vulgaris (strain DP4) (Desulfovibrio vulgaris).